A 129-amino-acid chain; its full sequence is UPF0148 protein APE_0207 (129 aa).

The protein belongs to the UPF0148 family.

The polypeptide is UPF0148 protein APE_0207 (Aeropyrum pernix (strain ATCC 700893 / DSM 11879 / JCM 9820 / NBRC 100138 / K1)).